A 1029-amino-acid polypeptide reads, in one-letter code: Carbamoyl phosphate synthase large chain (1029 aa).

Positions 1–402 (MPKRTDLQTI…SLQKALRSTE (402 aa)) are carboxyphosphate synthetic domain. R129, R169, G175, G176, E208, I210, E215, G241, V242, H243, Q285, and E299 together coordinate ATP. Residues 133–328 (QAAMKKIGVE…IAKIAALLAV (196 aa)) form the ATP-grasp 1 domain. 3 residues coordinate Mg(2+): Q285, E299, and N301. Positions 285, 299, and 301 each coordinate Mn(2+). Residues 403 to 546 (SDVRGAFAEM…YSTYEWEDEV (144 aa)) are oligomerization domain. The interval 547–929 (TPTDKPKVVI…AYYRAELGAK (383 aa)) is carbamoyl phosphate synthetic domain. The ATP-grasp 2 domain occupies 671-863 (NALCERLGLP…LAKYAARIAV (193 aa)). R707, Q747, L749, E754, G779, V780, H781, S782, Q822, and E834 together coordinate ATP. Mg(2+)-binding residues include Q822, E834, and N836. The Mn(2+) site is built by Q822, E834, and N836. The region spanning 930–1028 (SNLPLSGTAL…QAWQQREAAA (99 aa)) is the MGS-like domain. The segment at 930–1029 (SNLPLSGTAL…AWQQREAAAS (100 aa)) is allosteric domain.

This sequence belongs to the CarB family. In terms of assembly, composed of two chains; the small (or glutamine) chain promotes the hydrolysis of glutamine to ammonia, which is used by the large (or ammonia) chain to synthesize carbamoyl phosphate. Tetramer of heterodimers (alpha,beta)4. Mg(2+) serves as cofactor. The cofactor is Mn(2+).

It carries out the reaction hydrogencarbonate + L-glutamine + 2 ATP + H2O = carbamoyl phosphate + L-glutamate + 2 ADP + phosphate + 2 H(+). The enzyme catalyses hydrogencarbonate + NH4(+) + 2 ATP = carbamoyl phosphate + 2 ADP + phosphate + 2 H(+). It functions in the pathway amino-acid biosynthesis; L-arginine biosynthesis; carbamoyl phosphate from bicarbonate: step 1/1. The protein operates within pyrimidine metabolism; UMP biosynthesis via de novo pathway; (S)-dihydroorotate from bicarbonate: step 1/3. In terms of biological role, large subunit of the glutamine-dependent carbamoyl phosphate synthetase (CPSase). CPSase catalyzes the formation of carbamoyl phosphate from the ammonia moiety of glutamine, carbonate, and phosphate donated by ATP, constituting the first step of 2 biosynthetic pathways, one leading to arginine and/or urea and the other to pyrimidine nucleotides. The large subunit (synthetase) binds the substrates ammonia (free or transferred from glutamine from the small subunit), hydrogencarbonate and ATP and carries out an ATP-coupled ligase reaction, activating hydrogencarbonate by forming carboxy phosphate which reacts with ammonia to form carbamoyl phosphate. This Deinococcus geothermalis (strain DSM 11300 / CIP 105573 / AG-3a) protein is Carbamoyl phosphate synthase large chain.